The primary structure comprises 433 residues: Enolase 2 (433 aa).

Residues 34–56 (RGMVPSGASTGEHEAVELRDGDK) form a disordered region. Residues 44 to 56 (GEHEAVELRDGDK) are compositionally biased toward basic and acidic residues. Gln163 is a (2R)-2-phosphoglycerate binding site. The active-site Proton donor is Glu205. Positions 243, 290, and 317 each coordinate Mg(2+). (2R)-2-phosphoglycerate-binding residues include Lys342, Arg371, Ser372, and Lys393. Catalysis depends on Lys342, which acts as the Proton acceptor.

The protein belongs to the enolase family. Mg(2+) serves as cofactor.

The protein resides in the cytoplasm. The protein localises to the secreted. It localises to the cell surface. It catalyses the reaction (2R)-2-phosphoglycerate = phosphoenolpyruvate + H2O. It functions in the pathway carbohydrate degradation; glycolysis; pyruvate from D-glyceraldehyde 3-phosphate: step 4/5. Its function is as follows. Catalyzes the reversible conversion of 2-phosphoglycerate (2-PG) into phosphoenolpyruvate (PEP). It is essential for the degradation of carbohydrates via glycolysis. This Lactococcus lactis subsp. cremoris (strain SK11) protein is Enolase 2.